A 571-amino-acid chain; its full sequence is Glutamate--tRNA ligase (571 aa).

Over residues Gly75–Leu88 the composition is skewed to basic and acidic residues. A disordered region spans residues Gly75–Asn98. Residues Pro105–His115 carry the 'HIGH' region motif.

The protein belongs to the class-I aminoacyl-tRNA synthetase family. Glutamate--tRNA ligase type 2 subfamily.

It is found in the cytoplasm. It carries out the reaction tRNA(Glu) + L-glutamate + ATP = L-glutamyl-tRNA(Glu) + AMP + diphosphate. Catalyzes the attachment of glutamate to tRNA(Glu) in a two-step reaction: glutamate is first activated by ATP to form Glu-AMP and then transferred to the acceptor end of tRNA(Glu). This is Glutamate--tRNA ligase from Methanopyrus kandleri (strain AV19 / DSM 6324 / JCM 9639 / NBRC 100938).